Consider the following 280-residue polypeptide: 3-dehydroshikimate dehydratase (280 aa).

Positions 70, 102, and 142 each coordinate substrate. Residue Glu142 participates in Mn(2+) binding. Residue His144 is the Proton acceptor of the active site. Substrate-binding residues include Asp172 and His175. Asp172 lines the Mn(2+) pocket. His198 is a Mn(2+) binding site. Tyr217 and Glu253 together coordinate substrate. Glu253 lines the Mn(2+) pocket.

In terms of assembly, homodimer. Mn(2+) serves as cofactor.

It catalyses the reaction 3-dehydroshikimate = 3,4-dihydroxybenzoate + H2O. Its pathway is aromatic compound metabolism; 3,4-dihydroxybenzoate biosynthesis; 3,4-dihydroxybenzoate from 3-dehydroquinate: step 2/2. The protein operates within siderophore biosynthesis; petrobactin biosynthesis. In terms of biological role, involved in the biosynthesis of petrobactin, a catecholate siderophore that functions in both iron acquisition and virulence. Catalyzes the conversion of 3-dehydroshikimate to 3,4-dihydroxybenzoate (3,4-DHBA). The polypeptide is 3-dehydroshikimate dehydratase (Bacillus anthracis).